The primary structure comprises 358 residues: WD repeat domain phosphoinositide-interacting protein 4 (358 aa).

WD repeat units lie at residues 2–40 and 188–228; these read AQQRGVNSLQFNQDQSCFCCAMETGVRIYNVEPLMEKGH and AHQS…KLVE. A L/FRRG motif motif is present at residues 229–232; that stretch reads LRRG. The WD 3 repeat unit spans residues 233–272; that stretch reads TDPATLYCINFSHDSSFLCASSDKGTVHIFALKDTKLNRR.

Belongs to the WD repeat PROPPIN family.

Its subcellular location is the preautophagosomal structure. Its function is as follows. Component of the autophagy machinery that controls the major intracellular degradation process by which cytoplasmic materials are packaged into autophagosomes and delivered to lysosomes for degradation. Binds phosphatidylinositol 3-phosphate (PtdIns3P). This chain is WD repeat domain phosphoinositide-interacting protein 4 (wdr45), found in Danio rerio (Zebrafish).